A 95-amino-acid polypeptide reads, in one-letter code: Large ribosomal subunit protein bL27 (95 aa).

A propeptide spanning residues 1-6 (MILQLF) is cleaved from the precursor.

It belongs to the bacterial ribosomal protein bL27 family. Post-translationally, the N-terminus is cleaved by ribosomal processing cysteine protease Prp.

The sequence is that of Large ribosomal subunit protein bL27 from Caldanaerobacter subterraneus subsp. tengcongensis (strain DSM 15242 / JCM 11007 / NBRC 100824 / MB4) (Thermoanaerobacter tengcongensis).